Reading from the N-terminus, the 546-residue chain is Phosphoglucomutase (546 aa).

S135 acts as the Phosphoserine intermediate in catalysis. Mg(2+) is bound by residues S135, D288, D290, and D292.

The protein belongs to the phosphohexose mutase family. The cofactor is Mg(2+).

The catalysed reaction is alpha-D-glucose 1-phosphate = alpha-D-glucose 6-phosphate. Its pathway is glycolipid metabolism; diglucosyl-diacylglycerol biosynthesis. In terms of biological role, catalyzes the interconversion between glucose-6-phosphate and alpha-glucose-1-phosphate. This is the first step in the biosynthesis of diglucosyl-diacylglycerol (Glc2-DAG), i.e. a glycolipid found in the membrane, which is also used as a membrane anchor for lipoteichoic acid (LTA). The protein is Phosphoglucomutase (pgcA) of Staphylococcus epidermidis (strain ATCC 35984 / DSM 28319 / BCRC 17069 / CCUG 31568 / BM 3577 / RP62A).